The following is a 909-amino-acid chain: Tubulin polyglutamylase TTLL7 (909 aa).

A TTL domain is found at 40 to 392; that stretch reads NGAITANVVG…RASDKKKNLA (353 aa). Residues Lys162, 168 to 169, 190 to 193, and 203 to 205 contribute to the ATP site; these read MG, QEYL, and KFD. Arg229 is a binding site for L-glutamate. An ATP-binding site is contributed by 251–252; sequence TN. Positions 253, 254, and 273 each coordinate L-glutamate. Mg(2+) is bound by residues Asp338, Glu351, and Asn353. Residue Lys369 participates in L-glutamate binding. The tract at residues 390–452 is c-MTBD region; sequence NLAKQKAEAQ…ISREEYENRH (63 aa). Disordered stretches follow at residues 517 to 580 and 603 to 688; these read DEKL…KVSY and KAAR…PSIS. Residues 518 to 531 show a composition bias toward basic and acidic residues; sequence EKLSGKPTRPKEPR. The segment covering 532–542 has biased composition (polar residues); it reads TLSSMPESTQT. Low complexity predominate over residues 548–562; sequence NYSSHSSSNSTGSSS. Positions 571–580 are enriched in basic and acidic residues; that stretch reads KEGKEKKVSY. Low complexity predominate over residues 604 to 625; it reads AARPFSNSSSPSSAASMRRSVS. The span at 626–657 shows a compositional bias: polar residues; sequence CPRSITALNTQSPTTDQRPFSSRISSTITRPL. The segment covering 658-673 has biased composition (low complexity); the sequence is SGNRTNSLNRSSSSNR. A compositionally biased stretch (polar residues) spans 674 to 688; it reads VPQSGTSGSVYPSIS.

The protein belongs to the tubulin--tyrosine ligase family. As to quaternary structure, interacts with both alpha- and beta-tubulin (via C-terminal tubulin tails). Mg(2+) serves as cofactor.

Its subcellular location is the cell projection. It localises to the cilium. The protein localises to the cytoplasm. It is found in the cytoskeleton. The protein resides in the cilium basal body. Its subcellular location is the dendrite. It localises to the perikaryon. The enzyme catalyses L-glutamyl-[protein] + L-glutamate + ATP = gamma-L-glutamyl-L-glutamyl-[protein] + ADP + phosphate + H(+). It catalyses the reaction (L-glutamyl)(n)-gamma-L-glutamyl-L-glutamyl-[protein] + L-glutamate + ATP = (L-glutamyl)(n+1)-gamma-L-glutamyl-L-glutamyl-[protein] + ADP + phosphate + H(+). Its function is as follows. Polyglutamylase which modifies tubulin, generating polyglutamate side chains of variable lengths on the gamma-carboxyl group of specific glutamate residues within the C-terminal tail of tubulin. Mediates both ATP-dependent initiation and elongation steps of the polyglutamylation reaction. Preferentially modifies the beta-tubulin tail over an alpha-tail. Competes with monoglycylase TTLL3 for modification site on beta-tubulin substrate, thereby creating an anticorrelation between glycylation and glutamylation reactions. The chain is Tubulin polyglutamylase TTLL7 from Xenopus tropicalis (Western clawed frog).